A 142-amino-acid polypeptide reads, in one-letter code: Fluoride-specific ion channel FluC 1 (142 aa).

4 consecutive transmembrane segments (helical) span residues 23–43, 54–74, 79–99, and 116–136; these read VNIA…YLID, LPLG…GLIG, GWLL…FSTF, and LGNV…AVSL. The Na(+) site is built by Gly-91 and Thr-94.

The protein belongs to the fluoride channel Fluc/FEX (TC 1.A.43) family.

It is found in the cell membrane. The catalysed reaction is fluoride(in) = fluoride(out). With respect to regulation, na(+) is not transported, but it plays an essential structural role and its presence is essential for fluoride channel function. Fluoride-specific ion channel. Important for reducing fluoride concentration in the cell, thus reducing its toxicity. The sequence is that of Fluoride-specific ion channel FluC 1 from Nocardia farcinica (strain IFM 10152).